The following is a 409-amino-acid chain: Gamma-glutamyl phosphate reductase (409 aa).

Belongs to the gamma-glutamyl phosphate reductase family.

It localises to the cytoplasm. The catalysed reaction is L-glutamate 5-semialdehyde + phosphate + NADP(+) = L-glutamyl 5-phosphate + NADPH + H(+). It functions in the pathway amino-acid biosynthesis; L-proline biosynthesis; L-glutamate 5-semialdehyde from L-glutamate: step 2/2. Its function is as follows. Catalyzes the NADPH-dependent reduction of L-glutamate 5-phosphate into L-glutamate 5-semialdehyde and phosphate. The product spontaneously undergoes cyclization to form 1-pyrroline-5-carboxylate. In Mycobacterium leprae (strain TN), this protein is Gamma-glutamyl phosphate reductase.